A 266-amino-acid chain; its full sequence is ATP synthase subunit a (266 aa).

6 helical membrane-spanning segments follow: residues 38–58, 99–119, 126–146, 162–182, 191–211, and 224–244; these read KQML…VLAA, LLFS…IPLI, HVGG…AIGI, GVPW…NFVV, LFAT…GIEY, and SVLV…IMVL.

This sequence belongs to the ATPase A chain family. As to quaternary structure, F-type ATPases have 2 components, CF(1) - the catalytic core - and CF(0) - the membrane proton channel. CF(1) has five subunits: alpha(3), beta(3), gamma(1), delta(1), epsilon(1). CF(0) has three main subunits: a(1), b(2) and c(9-12). The alpha and beta chains form an alternating ring which encloses part of the gamma chain. CF(1) is attached to CF(0) by a central stalk formed by the gamma and epsilon chains, while a peripheral stalk is formed by the delta and b chains.

It is found in the cell membrane. Its function is as follows. Key component of the proton channel; it plays a direct role in the translocation of protons across the membrane. The sequence is that of ATP synthase subunit a from Pseudarthrobacter chlorophenolicus (strain ATCC 700700 / DSM 12829 / CIP 107037 / JCM 12360 / KCTC 9906 / NCIMB 13794 / A6) (Arthrobacter chlorophenolicus).